We begin with the raw amino-acid sequence, 800 residues long: MEIHVTYNTTLICLSILIACTASYISLELSRKVTINTGLKSKIWLIGGSLIMGFGIWSMHFVGMMAVHMEMPMEYEFMPLMAAIGASVSGSFVSLYFVSRHILTYYRLLTGSVVLGASIASMHYIGMSAISRVMIIYEPILFTVSIIIAIAASFVSLKIFFDLAVKKHSEHLIFYKGVSSIVMGIGISGMHYTGMLAATFHKDMAPPGSHMEVQTFHWSIFVTLIIFCIQTLLLFSSHADRKFIKQSERIKDNEQRFQSLIVHNIDAIFILSLEGDIISSNHAGEEMISKFGFSMHDWRNYTSLKVKRLFEQVKKDKQAMNSDSDLITEKGQFHLNITLIPVEVNQELDSIYVICKDMTKQYKAEKEIHRMAHYDSLTDLPNRRHAISHLTKVLNREHSLHYNTVVFFLDLNRFKVINDALGHNVGDQLLQFAAKRLSSVVPDNGFIARLGGDEFIIILTDANTGTGEADVLARKIIQKFKKPFKIQDHTLVTSVSIGIAISPKDGTDGLELMKKADMAMYAAKERNKSKYRYYSFSIGNKETVKLNQEMVLREAIENDRFVLHYQPQFSVKKQKMTGAEALIRLVTPDGQLRPPGEFIGVAEETGLIIDIGKWIIDEACKQARIWHDKGYDLSVAINISARQFQSKDLIPLIKDTLNKYQLPPQLLEVEVTESMTMDNLNHSKKVLSSLTELGIRISIDDFGTGHSSLSYLKDFPIHRLKIDKSFIDDIQTHPKSEQITGAIIAMGHQLSLQVIAEGVENAAQKQLLFEKGCDHLQGFFFSRPIPPEQFEQFIIEQPSQ.

A run of 7 helical transmembrane segments spans residues 5-27, 44-66, 76-98, 103-125, 135-157, 178-200, and 215-237; these read VTYN…YISL, WLIG…GMMA, EFMP…LYFV, LTYY…MHYI, IIYE…FVSL, VSSI…AATF, and TFHW…LFSS. The region spanning 7–201 is the MHYT domain; it reads YNTTLICLSI…YTGMLAATFH (195 aa). Residues 255–319 form the PAS domain; the sequence is QRFQSLIVHN…FEQVKKDKQA (65 aa). The GGDEF domain maps to 402–536; it reads YNTVVFFLDL…NKSKYRYYSF (135 aa). The region spanning 545 to 798 is the EAL domain; it reads KLNQEMVLRE…QFEQFIIEQP (254 aa).

Its subcellular location is the cell membrane. Functionally, probable signaling protein whose physiological role is not yet known. This chain is Signaling protein YkoW (ykoW), found in Bacillus subtilis (strain 168).